A 185-amino-acid polypeptide reads, in one-letter code: Large ribosomal subunit protein uL22 (185 aa).

The protein belongs to the universal ribosomal protein uL22 family. Part of the 50S ribosomal subunit.

Functionally, this protein binds specifically to 23S rRNA. It makes multiple contacts with different domains of the 23S rRNA in the assembled 50S subunit and ribosome. Its function is as follows. The globular domain of the protein is located near the polypeptide exit tunnel on the outside of the subunit, while an extended beta-hairpin is found that lines the wall of the exit tunnel in the center of the 70S ribosome. This is Large ribosomal subunit protein uL22 from Pyrobaculum aerophilum (strain ATCC 51768 / DSM 7523 / JCM 9630 / CIP 104966 / NBRC 100827 / IM2).